The following is a 252-amino-acid chain: Aquaporin TIP4-4 (252 aa).

The next 2 membrane-spanning stretches (helical) occupy residues A20–M40 and V53–A73. The NPA 1 motif lies at N83–A85. 3 helical membrane passes run V105–A125, G143–V163, and A168–G188. An NPA 2 motif is present at residues N197 to A199. A helical transmembrane segment spans residues V216–F236.

The protein belongs to the MIP/aquaporin (TC 1.A.8) family. TIP (TC 1.A.8.10) subfamily.

The protein localises to the vacuole membrane. Its function is as follows. Aquaporins facilitate the transport of water and small neutral solutes across cell membranes. The chain is Aquaporin TIP4-4 (TIP4-4) from Zea mays (Maize).